The primary structure comprises 1065 residues: Cellulose synthase A catalytic subunit 3 [UDP-forming] (1065 aa).

Over 1–260 the chain is Cytoplasmic; that stretch reads MESEGETAGK…PSSRINPYRM (260 aa). At serine 3 the chain carries Phosphoserine. 8 residues coordinate Zn(2+): cysteine 20, cysteine 23, cysteine 39, cysteine 42, cysteine 47, cysteine 50, cysteine 62, and cysteine 65. The RING-type; degenerate zinc finger occupies 20 to 66; the sequence is CQICSDNVGKTVDGDRFVACDICSFPVCRPCYEYERKDGNQSCPQCK. 3 positions are modified to phosphoserine: serine 151, serine 211, and serine 216. The chain crosses the membrane as a helical span at residues 261–281; the sequence is VIMLRLVILCLFLHYRITNPV. Residues 282–283 are Extracellular-facing; the sequence is PN. Residues 284–304 traverse the membrane as a helical segment; that stretch reads AFALWLVSVICEIWFALSWIL. At 305–842 the chain is on the cytoplasmic side; the sequence is DQFPKWFPVN…LERFAYVNTT (538 aa). Positions 343, 349, 350, and 379 each coordinate UDP-alpha-D-glucose. Aspartate 379 is an active-site residue. Residues 433 to 457 are a coiled coil; sequence VKDRRAMKREYEEFKIRINALVSKA. Lysine 520 lines the UDP-alpha-D-glucose pocket. 2 residues coordinate Mn(2+): lysine 521 and aspartate 545. The tract at residues 643–672 is disordered; that stretch reads SKLCGGSRKKNSKAKKESDKKKSGRHTDST. Positions 656–670 are enriched in basic and acidic residues; that stretch reads AKKESDKKKSGRHTD. Aspartate 765 is a catalytic residue. A helical membrane pass occupies residues 843–863; the sequence is IYPITSIPLLMYCTLPAVCLF. Topologically, residues 864–874 are extracellular; it reads TNQFIIPQISN. Residues 875–895 form a helical membrane-spanning segment; it reads IASIWFLSLFLSIFATGILEM. The Cytoplasmic segment spans residues 896 to 910; the sequence is RWSGVGIDEWWRNEQ. A helical transmembrane segment spans residues 911–931; that stretch reads FWVIGGVSAHLFAVFQGILKV. The Extracellular segment spans residues 932-961; sequence LAGIDTNFTVTSKASDEDGDFAELYLFKWT. An N-linked (GlcNAc...) asparagine glycan is attached at asparagine 938. A helical membrane pass occupies residues 962-982; it reads TLLIPPTTLLIVNLVGVVAGV. Over 983 to 993 the chain is Cytoplasmic; it reads SYAINSGYQSW. The chain crosses the membrane as a helical span at residues 994 to 1014; sequence GPLFGKLFFAFWVIVHLYPFL. Topologically, residues 1015–1023 are extracellular; that stretch reads KGLMGRQNR. The helical transmembrane segment at 1024-1044 threads the bilayer; it reads TPTIVVVWSVLLASIFSLLWV. At 1045-1065 the chain is on the cytoplasmic side; sequence RIDPFTSRVTGPDILECGINC.

The protein belongs to the glycosyltransferase 2 family. Plant cellulose synthase subfamily. Homodimer. Interacts with CESA1 and CESA6. Interacts with STL1 and STL2, but not with GOT1. Binds to CSI1 and CSI3. Interacts with PAT24/TIP1. The cofactor is Zn(2+). Requires Mn(2+) as cofactor. Post-translationally, palmitoylated, in part by PAT24/TIP1. Expressed in young plants, flowers and roots, and to a lower extent in leaves and stems. Localized in all cells except meristematic cells. Accumulates particularly in root caps, root hairs, epidermal layer, midveins of leaves and anthers. Not present in old tissues.

It localises to the cell membrane. The protein localises to the golgi apparatus membrane. The catalysed reaction is [(1-&gt;4)-beta-D-glucosyl](n) + UDP-alpha-D-glucose = [(1-&gt;4)-beta-D-glucosyl](n+1) + UDP + H(+). It functions in the pathway glycan metabolism; plant cellulose biosynthesis. Catalytic subunit of cellulose synthase terminal complexes ('rosettes'), required for beta-1,4-glucan microfibril crystallization, a major mechanism of the cell wall formation. Involved in the primary cell wall formation, especially in roots. This Arabidopsis thaliana (Mouse-ear cress) protein is Cellulose synthase A catalytic subunit 3 [UDP-forming].